The chain runs to 305 residues: MLNKLKIGTLLLLTLTACSPNSVHSVTSNPQPASAPVQQSATQATFQQTLANLEQQYQARIGVYVWDTETGHSLSYRADERFAYASTFKALLAGAVLQSLPEKDLNRTISYSQKDLVSYSPETQKYVGKGMTIAQLCEAAVRFSDNSATNLLLKELGGVEQYQRILRQLGDNVTHTNRLEPDLNQAKPNDIRDTSTPKQMAMNLNAYLLGNTLTESQKTILWNWLDNNATGNPLIRAATPTSWKVYDKSGAGKYGVRNDIAVVRIPNRKPIVMAIMSTQFTEEAKFNNKLVEDAAKQVFHTLQLN.

An N-terminal signal peptide occupies residues 1 to 33; the sequence is MLNKLKIGTLLLLTLTACSPNSVHSVTSNPQPA. Residue serine 86 is the Acyl-ester intermediate of the active site. 248–250 is a binding site for substrate; it reads KSG.

It belongs to the class-A beta-lactamase family.

The enzyme catalyses a beta-lactam + H2O = a substituted beta-amino acid. This is Beta-lactamase ROB-1 (rob1) from Actinobacillus pleuropneumoniae (Haemophilus pleuropneumoniae).